The sequence spans 513 residues: ATP synthase subunit alpha (513 aa).

169–176 contacts ATP; sequence GDRQTGKT.

Belongs to the ATPase alpha/beta chains family. In terms of assembly, F-type ATPases have 2 components, CF(1) - the catalytic core - and CF(0) - the membrane proton channel. CF(1) has five subunits: alpha(3), beta(3), gamma(1), delta(1), epsilon(1). CF(0) has three main subunits: a(1), b(2) and c(9-12). The alpha and beta chains form an alternating ring which encloses part of the gamma chain. CF(1) is attached to CF(0) by a central stalk formed by the gamma and epsilon chains, while a peripheral stalk is formed by the delta and b chains.

The protein localises to the cell inner membrane. It carries out the reaction ATP + H2O + 4 H(+)(in) = ADP + phosphate + 5 H(+)(out). Its function is as follows. Produces ATP from ADP in the presence of a proton gradient across the membrane. The alpha chain is a regulatory subunit. In Yersinia enterocolitica serotype O:8 / biotype 1B (strain NCTC 13174 / 8081), this protein is ATP synthase subunit alpha.